A 253-amino-acid chain; its full sequence is Triosephosphate isomerase (253 aa).

Residue 8 to 10 participates in substrate binding; it reads NWK. The active-site Electrophile is the histidine 93. The Proton acceptor role is filled by glutamate 165. Residues glycine 171, serine 210, and 231–232 contribute to the substrate site; that span reads GG.

This sequence belongs to the triosephosphate isomerase family. As to quaternary structure, homodimer.

Its subcellular location is the cytoplasm. The enzyme catalyses D-glyceraldehyde 3-phosphate = dihydroxyacetone phosphate. The protein operates within carbohydrate biosynthesis; gluconeogenesis. It functions in the pathway carbohydrate degradation; glycolysis; D-glyceraldehyde 3-phosphate from glycerone phosphate: step 1/1. Functionally, involved in the gluconeogenesis. Catalyzes stereospecifically the conversion of dihydroxyacetone phosphate (DHAP) to D-glyceraldehyde-3-phosphate (G3P). The protein is Triosephosphate isomerase of Francisella tularensis subsp. novicida (strain U112).